We begin with the raw amino-acid sequence, 1382 residues long: Ninein-like protein (1382 aa).

EF-hand domains follow at residues 7–42 (HYVS…LHLE) and 41–76 (LEQQ…VLSS). Residues 144–164 (ASLESVESPKSDEEAESTKEA) form a disordered region. Residue Ser-148 is modified to Phosphoserine. Positions 150–164 (ESPKSDEEAESTKEA) are enriched in basic and acidic residues. 2 EF-hand domains span residues 196-231 (TPES…VGLQ) and 233-268 (LEKE…HEPA). Ca(2+) contacts are provided by Asp-246, Asp-248, Asp-250, Lys-252, and Glu-257. Coiled coils occupy residues 384–424 (QELS…MDDC), 484–579 (AGLR…WARL), and 616–699 (IETE…QLQD). The KEN box motif lies at 495 to 497 (KEN). The D-box motif lies at 633–641 (RTQLETKVN). Disordered regions lie at residues 857 to 969 (PLAW…ASCR) and 982 to 1006 (RARS…GALE). The segment covering 991–1004 (QEQASEQQARAEGA) has biased composition (low complexity). The stretch at 1046–1375 (ETKIALEREK…RALNKLVSRI (330 aa)) forms a coiled coil.

In terms of assembly, interacts with gamma-tubulin and TUBGCP4. Interacts with anaphase promoting complex/cyclosome (APC/C). Interacts with CDC20 and FZR1. Isoform 2 interacts with LCA5 and USH2A. Isoform 2 interacts with DZANK1. In terms of processing, phosphorylated by PLK1 which disrupts its centrosome association and interaction with gamma-tubulin. Ubiquitinated by the APC/C complex leading to its degradation. Expressed in KYSE-150 esophageal carcinoma, HeLa cervical carcinoma and U2OS osteosarcoma cells. Expression is regulated in a cell cycle-dependent manner and peaks during G2/M phase (at protein level). Expressed in fetal heart, skeletal muscle, liver, lung and cochlea, and in adult brain, testis, kidney and retina.

It localises to the cytoplasm. The protein localises to the cytoskeleton. The protein resides in the microtubule organizing center. It is found in the centrosome. In terms of biological role, involved in the microtubule organization in interphase cells. Overexpression induces the fragmentation of the Golgi, and causes lysosomes to disperse toward the cell periphery; it also interferes with mitotic spindle assembly. Involved in vesicle transport in photoreceptor cells. May play a role in ovarian carcinogenesis. This is Ninein-like protein (NINL) from Homo sapiens (Human).